The sequence spans 179 residues: MQTPVSVNEKKDFIRWFLNHYQLKRRECVWILNYLMSHDSLMEKVHFVEQAEFCPRGIIMSTHCVEEVPFRFYKENVMTTDAEKSFHDIRLNKQQDLFIQLNFRSAYSSPEYAAVLESNPHIPKNLFENKKDQGLAEQILEHAISTFQREKLLKDIDDALDRHDKEAFEQLSRQLNQLT.

The protein belongs to the UPF0302 family.

In Bacillus subtilis (strain 168), this protein is UPF0302 protein YpiB (ypiB).